The following is a 470-amino-acid chain: 63 kDa sperm flagellar membrane protein (470 aa).

Residues 1 to 25 (MFCHLHCMLVVFSLLLTLTGSFVNA) form the signal peptide. The EGF-like 1 domain occupies 41–80 (PPDPCASNPCTIASTHCVAAGESHTCECRPGYFETNGNCT). 3 cysteine pairs are disulfide-bonded: Cys-45–Cys-57, Cys-50–Cys-66, and Cys-68–Cys-79. Asn-78, Asn-170, and Asn-219 each carry an N-linked (GlcNAc...) asparagine glycan. The region spanning 81-205 (VAQQFAGSFS…STITVSDFDE (125 aa)) is the SEA domain. Residues 202–250 (DFDECASADDNDCDPNANCTNTAGSFTCECDTELYDNSPNTEEPGRVCI) form the EGF-like 2; calcium-binding domain. 6 disulfide bridges follow: Cys-206–Cys-220, Cys-214–Cys-229, Cys-231–Cys-249, Cys-253–Cys-265, Cys-258–Cys-277, and Cys-279–Cys-291. Residues 249–292 (CIAPCDPGLCTRPNEICNNGGTIEDDNLCKCIEGYDYTQYGDCD) form the EGF-like 3 domain. Residue Asn-322 is glycosylated (N-linked (GlcNAc...) asparagine). Gly-446 carries GPI-anchor amidated glycine lipidation. A propeptide spans 447 to 470 (SQRHLPVCGVLSLVVTTLLALMLH) (removed in mature form).

In terms of tissue distribution, sperm.

It is found in the cell projection. The protein localises to the cilium. It localises to the flagellum membrane. This chain is 63 kDa sperm flagellar membrane protein, found in Strongylocentrotus purpuratus (Purple sea urchin).